The sequence spans 256 residues: Thiazole synthase (256 aa).

The active-site Schiff-base intermediate with DXP is Lys95. Residues Gly156, 182 to 183 (AG), and 204 to 205 (NT) each bind 1-deoxy-D-xylulose 5-phosphate.

This sequence belongs to the ThiG family. In terms of assembly, homotetramer. Forms heterodimers with either ThiH or ThiS.

The protein resides in the cytoplasm. It carries out the reaction [ThiS sulfur-carrier protein]-C-terminal-Gly-aminoethanethioate + 2-iminoacetate + 1-deoxy-D-xylulose 5-phosphate = [ThiS sulfur-carrier protein]-C-terminal Gly-Gly + 2-[(2R,5Z)-2-carboxy-4-methylthiazol-5(2H)-ylidene]ethyl phosphate + 2 H2O + H(+). It functions in the pathway cofactor biosynthesis; thiamine diphosphate biosynthesis. In terms of biological role, catalyzes the rearrangement of 1-deoxy-D-xylulose 5-phosphate (DXP) to produce the thiazole phosphate moiety of thiamine. Sulfur is provided by the thiocarboxylate moiety of the carrier protein ThiS. In vitro, sulfur can be provided by H(2)S. This Shigella boydii serotype 18 (strain CDC 3083-94 / BS512) protein is Thiazole synthase.